The chain runs to 228 residues: Deoxyguanosine kinase (228 aa).

8–16 (GPIGAGKSS) is a binding site for ATP. Substrate is bound by residues Glu32, Tyr44, and Gln55. The active-site Proton acceptor is the Asp78. Residues Arg79, Asp84, and Glu149 each contribute to the substrate site.

This sequence belongs to the DCK/DGK family. As to quaternary structure, heterodimer of a deoxyadenosine (DAK) and a deoxyguanosine kinase (DGK).

It carries out the reaction 2'-deoxyguanosine + ATP = dGMP + ADP + H(+). Functionally, DGK/DAK plays an essential role in generating the deoxyribonucleotide precursors, dGTP and dATP, for DNA metabolism. This chain is Deoxyguanosine kinase, found in Lactobacillus acidophilus (strain ATCC 700396 / NCK56 / N2 / NCFM).